A 981-amino-acid polypeptide reads, in one-letter code: Ephrin type-A receptor 3 (981 aa).

The N-terminal stretch at 1–20 is a signal peptide; that stretch reads MALFRIYSFLAPFHILVLCQ. The Extracellular portion of the chain corresponds to 21 to 545; that stretch reads ALRNYPDNEV…LAVGDPNQQT (525 aa). The 182-residue stretch at 29 to 210 folds into the Eph LBD domain; the sequence is EVTLLDSMSA…FYKRCPLAVL (182 aa). Fibronectin type-III domains lie at 328–441 and 442–533; these read PPSA…TSQT and VSVI…TSHE. 4 N-linked (GlcNAc...) asparagine glycosylation sites follow: asparagine 340, asparagine 410, asparagine 435, and asparagine 485. The chain crosses the membrane as a helical span at residues 546 to 566; it reads ILAISVAGGAVLLVLLVACFI. Topologically, residues 567–981 are cytoplasmic; the sequence is VSGRRCGYIK…QAHHGTQVQV (415 aa). Phosphotyrosine; by autocatalysis occurs at positions 601 and 607. The region spanning 626 to 887 is the Protein kinase domain; it reads IRIERVIGAG…QIVNTLDRLI (262 aa). ATP-binding positions include 633 to 638, lysine 658, and 705 to 711; these read GAGEFG and EYMENGS. Position 706 is a phosphotyrosine; by autocatalysis (tyrosine 706). Catalysis depends on aspartate 751, which acts as the Proton acceptor. 755 to 756 serves as a coordination point for ATP; sequence RN. Residues tyrosine 784 and tyrosine 927 each carry the phosphotyrosine; by autocatalysis modification. One can recognise an SAM domain in the interval 910–974; the sequence is AAVNTVEDWL…LSSIQCLQAH (65 aa). Positions 979 to 981 match the PDZ-binding motif; sequence VQV.

Belongs to the protein kinase superfamily. Tyr protein kinase family. Ephrin receptor subfamily. Heterotetramer upon binding of the ligand. The heterotetramer is composed of an ephrin dimer and a receptor dimer. Oligomerization is probably required to induce biological responses. In terms of processing, autophosphorylates upon activation by efna5. Widely expressed in the developing zebrafish nervous system.

The protein resides in the cell membrane. It catalyses the reaction L-tyrosyl-[protein] + ATP = O-phospho-L-tyrosyl-[protein] + ADP + H(+). In terms of biological role, receptor tyrosine kinase which binds promiscuously membrane-bound ephrin family ligands residing on adjacent cells, leading to contact-dependent bidirectional signaling into neighboring cells. The signaling pathway downstream of the receptor is referred to as forward signaling while the signaling pathway downstream of the ephrin ligand is referred to as reverse signaling. Highly promiscuous for ephrin-A ligands it binds preferentially efna5. Upon activation by efna5 regulates cell-cell adhesion, cytoskeletal organization and cell migration. Plays a role in cardiac cells migration and differentiation probably through activation by efna1. Involved in the retinotectal mapping of neurons. May also control the segregation but not the guidance of motor and sensory axons during neuromuscular circuit development. The polypeptide is Ephrin type-A receptor 3 (epha3) (Danio rerio (Zebrafish)).